Here is a 355-residue protein sequence, read N- to C-terminus: Phytoene synthase (355 aa).

The protein belongs to the phytoene/squalene synthase family. The cofactor is ATP. Mn(2+) serves as cofactor. Requires Mg(2+) as cofactor.

The protein operates within carotenoid biosynthesis; phytoene biosynthesis. Its function is as follows. Involved in the biosynthesis of carotenoids. Catalyzes the condensation of two molecules of geranylgeranyl diphosphate (GGPP) to give prephytoene diphosphate (PPPP) and the subsequent rearrangement of the cyclopropylcarbinyl intermediate to yield phytoene. The polypeptide is Phytoene synthase (crtB) (Cereibacter sphaeroides (strain ATCC 17023 / DSM 158 / JCM 6121 / CCUG 31486 / LMG 2827 / NBRC 12203 / NCIMB 8253 / ATH 2.4.1.) (Rhodobacter sphaeroides)).